The following is a 71-amino-acid chain: Conotoxin Bu23 (71 aa).

Residues 1–21 (MGMRMMVTVFLLGVLATTVVS) form the signal peptide. The propeptide occupies 22 to 37 (LRSNRASDGRRGIVNK). An Asparagine amide modification is found at asparagine 70.

It belongs to the conotoxin A superfamily. Contains 3 disulfide bonds. They are not indicated here, since framework IV presents two different connectivities (I-V, II-III, IV-VI and I-III, II-V, IV-VI). As to expression, expressed by the venom duct.

It localises to the secreted. In Conus bullatus (Bubble cone), this protein is Conotoxin Bu23.